The sequence spans 351 residues: Phosphate acyltransferase (351 aa).

Belongs to the PlsX family. As to quaternary structure, homodimer. Probably interacts with PlsY.

It localises to the cytoplasm. The enzyme catalyses a fatty acyl-[ACP] + phosphate = an acyl phosphate + holo-[ACP]. Its pathway is lipid metabolism; phospholipid metabolism. Catalyzes the reversible formation of acyl-phosphate (acyl-PO(4)) from acyl-[acyl-carrier-protein] (acyl-ACP). This enzyme utilizes acyl-ACP as fatty acyl donor, but not acyl-CoA. This chain is Phosphate acyltransferase, found in Gloeothece citriformis (strain PCC 7424) (Cyanothece sp. (strain PCC 7424)).